Consider the following 1023-residue polypeptide: Probable histidine kinase 3 (1023 aa).

The Cytoplasmic segment spans residues 1–80; that stretch reads MDEMSCGGGG…RGWRVVRETW (80 aa). A helical transmembrane segment spans residues 81-101; it reads WWVLLLWILAGSLGSFYLFLF. The Extracellular segment spans residues 102-387; sequence MNAQSLDKRR…CRFEKKPPWP (286 aa). Positions 151–352 constitute a CHASE domain; that stretch reads TPSAIDQMTF…TNESPISMYG (202 aa). A helical membrane pass occupies residues 388–408; the sequence is WLAITSSFGTLVIALLTGHIF. Residues 409 to 1023 lie on the Cytoplasmic side of the membrane; that stretch reads QATVHRIAKV…RFFQNHDQVE (615 aa). The region spanning 445-715 is the Histidine kinase domain; the sequence is TVSHEIRTPM…TFTFTAVLMR (271 aa). Histidine 448 is modified (phosphohistidine; by autocatalysis). 2 Response regulatory domains span residues 732–854 and 880–1016; these read NALV…RRAL and QIIV…ARFF. The residue at position 783 (aspartate 783) is a 4-aspartylphosphate. The disordered stretch occupies residues 812-831; sequence LFLLGSSASSPKGGSDTSRE. A compositionally biased stretch (polar residues) spans 817 to 827; the sequence is SSASSPKGGSD. Aspartate 930 is subject to 4-aspartylphosphate.

Activation probably requires a transfer of a phosphate group between a His in the transmitter domain and an Asp of the receiver domain.

The protein localises to the cell membrane. The catalysed reaction is ATP + protein L-histidine = ADP + protein N-phospho-L-histidine.. In terms of biological role, cytokinin receptor related to bacterial two-component regulators. Functions as a histidine kinase and transmits the stress signal to a downstream MAPK cascade. This Oryza sativa subsp. indica (Rice) protein is Probable histidine kinase 3.